Reading from the N-terminus, the 526-residue chain is Fumitremorgin C synthase (526 aa).

A helical transmembrane segment spans residues 4–24 (LPLSPAVLFLTITLPILYFWI). Cysteine 443 is a heme binding site.

It belongs to the cytochrome P450 family. It depends on heme as a cofactor.

It localises to the membrane. The enzyme catalyses tryprostatin A + reduced [NADPH--hemoprotein reductase] + O2 = fumitremorgin C + oxidized [NADPH--hemoprotein reductase] + 2 H2O + H(+). The protein operates within mycotoxin biosynthesis. Functionally, cytochrome P450 monooxygenase; part of the gene cluster that mediates the biosynthesis of fumitremorgins, indole alkaloids that carry not only intriguing chemical structures, but also interesting biological and pharmacological activities. The biosynthesis of fumitremorgin-type alkaloids begins by condensation of the two amino acids L-tryptophan and L-proline to brevianamide F, catalyzed by the non-ribosomal peptide synthetase ftmPS/ftmA. Brevianamide F is then prenylated by the prenyltransferase ftmPT1/ftmB in the presence of dimethylallyl diphosphate, resulting in the formation of tryprostatin B. The three cytochrome P450 monooxygenases, ftmP450-1/ftmC, ftmP450-2/ftmE and ftmP450-3/FtmG, are responsible for the conversion of tryprostatin B to 6-hydroxytryprostatin B, tryprostatin A to fumitremorgin C and fumitremorgin C to 12,13-dihydroxyfumitremorgin C, respectively. The putative methyltransferase ftmMT/ftmD is expected for the conversion of 6-hydroxytryprostatin B to tryprostatin A. FtmPT2/FtmH catalyzes the prenylation of 12,13-dihydroxyfumitre-morgin C in the presence of dimethylallyl diphosphate, resulting in the formation of fumitremorgin B. Fumitremorgin B is further converted to verruculogen by ftmOx1/ftmF via the insertion of an endoperoxide bond between the two prenyl moieties. Finally, verruculogen is further converted to fumitremorgin A by the verruculogen prenyltransferase ftmPT3. This Neosartorya fischeri (strain ATCC 1020 / DSM 3700 / CBS 544.65 / FGSC A1164 / JCM 1740 / NRRL 181 / WB 181) (Aspergillus fischerianus) protein is Fumitremorgin C synthase.